Here is a 506-residue protein sequence, read N- to C-terminus: Histone acetyltransferase esa-1 (506 aa).

The segment at methionine 1–aspartate 24 is disordered. The 53-residue stretch at isoleucine 26–aspartate 78 folds into the Tudor-knot domain. Residues aspartate 82–asparagine 215 are disordered. A compositionally biased stretch (basic and acidic residues) spans asparagine 87 to threonine 98. Residues glutamine 109–serine 120 are compositionally biased toward basic residues. A compositionally biased stretch (basic and acidic residues) spans glycine 167 to glutamate 178. In terms of domain architecture, MYST-type HAT spans serine 220–proline 494. The C2HC MYST-type zinc finger occupies isoleucine 253 to leucine 278. The ESA1-RPD3 motif signature appears at arginine 303 to tyrosine 324. Lysine 320 is subject to N6-acetyllysine; by autocatalysis. Acetyl-CoA-binding positions include alanine 361 to threonine 365 and glutamine 370 to arginine 376. Glutamate 396 serves as the catalytic Proton donor/acceptor. Serine 400 provides a ligand contact to acetyl-CoA.

It belongs to the MYST (SAS/MOZ) family. Component of the NuA4 histone acetyltransferase complex. In terms of processing, autoacetylation at Lys-320 is required for proper function.

It is found in the nucleus. Its subcellular location is the chromosome. It carries out the reaction L-lysyl-[histone] + acetyl-CoA = N(6)-acetyl-L-lysyl-[histone] + CoA + H(+). The enzyme catalyses L-lysyl-[protein] + acetyl-CoA = N(6)-acetyl-L-lysyl-[protein] + CoA + H(+). It catalyses the reaction 2-hydroxyisobutanoyl-CoA + L-lysyl-[protein] = N(6)-(2-hydroxyisobutanoyl)-L-lysyl-[protein] + CoA + H(+). The catalysed reaction is (2E)-butenoyl-CoA + L-lysyl-[protein] = N(6)-(2E)-butenoyl-L-lysyl-[protein] + CoA + H(+). Functionally, catalytic component of the NuA4 histone acetyltransferase (HAT) complex which is involved in epigenetic transcriptional activation of selected genes principally by acetylation of nucleosomal histones H4, H3, H2B, H2A and H2A variant H2A.Z. Acetylates histone H4 to form H4K5ac, H4K8ac, H4K12ac and H4K16ac, histone H3 to form H3K14ac, and histone H2A to form H2AK4ac and H2AK7ac. The NuA4 complex is involved in the DNA damage response and is required for chromosome segregation. The NuA4 complex plays a direct role in repair of DNA double-strand breaks (DSBs) through homologous recombination. Recruitment to promoters depends on H3K4me. Also acetylates non-histone proteins. In addition to protein acetyltransferase, can use different acyl-CoA substrates, such as 2-hydroxyisobutanoyl-CoA (2-hydroxyisobutyryl-CoA) or (2E)-butenoyl-CoA (crotonyl-CoA), and is able to mediate protein 2-hydroxyisobutyrylation and crotonylation, respectively. The protein is Histone acetyltransferase esa-1 (esa-1) of Neurospora crassa (strain ATCC 24698 / 74-OR23-1A / CBS 708.71 / DSM 1257 / FGSC 987).